The primary structure comprises 480 residues: Uridine 5'-monophosphate synthase (480 aa).

The residue at position 2 (A2) is an N-acetylalanine. Residues 2–214 (AVARAALGPL…VFVAANHNGS (213 aa)) form an OPRTase region. Y37 bears the Phosphotyrosine mark. At S214 the chain carries Phosphoserine. Positions 215-220 (PLSIKE) are domain linker. Residues 221–480 (APKELSFGAR…WEAYLSRLGV (260 aa)) form an OMPdecase region. S257 provides a ligand contact to orotidine 5'-phosphate. Residues S257, D259, and 281 to 283 (KTH) contribute to the UMP site. Position 281 (K281) interacts with orotidine 5'-phosphate. Active-site for OMPdecase activity residues include D312, K314, and D317. Orotidine 5'-phosphate contacts are provided by residues K314, D317, T321, S372, 430-432 (QQY), and 450-451 (GR). Residues D317, T321, S372, 430–432 (QQY), and 450–451 (GR) each bind UMP.

In the N-terminal section; belongs to the purine/pyrimidine phosphoribosyltransferase family. This sequence in the C-terminal section; belongs to the OMP decarboxylase family. As to quaternary structure, homodimer; dimerization is required for enzymatic activity.

It catalyses the reaction orotidine 5'-phosphate + diphosphate = orotate + 5-phospho-alpha-D-ribose 1-diphosphate. It carries out the reaction orotidine 5'-phosphate + H(+) = UMP + CO2. It functions in the pathway pyrimidine metabolism; UMP biosynthesis via de novo pathway; UMP from orotate: step 1/2. The protein operates within pyrimidine metabolism; UMP biosynthesis via de novo pathway; UMP from orotate: step 2/2. Functionally, bifunctional enzyme catalyzing the last two steps of de novo pyrimidine biosynthesis, orotate phosphoribosyltransferase (OPRT), which converts orotate to orotidine-5'-monophosphate (OMP), and orotidine-5'-monophosphate decarboxylase (ODC), the terminal enzymatic reaction that decarboxylates OMP to uridine monophosphate (UMP). This is Uridine 5'-monophosphate synthase from Homo sapiens (Human).